Consider the following 173-residue polypeptide: MTVLDIVTYPADVLKDGALPVANIDGKLQQLIDDMAQTMYAHQGVGLAAVQVDSGLRLVIYDVSDQREKQQFRVVINPEVVAVDGECVSEQEGCLSVPELRTDVKRAATVRVEGVDREGRPLVIDAEGLEAIVLQHEIDHLNGTLILDRASRLKRELYKRKVQKRIKQAWQET.

The Fe cation site is built by cysteine 94 and histidine 136. The active site involves glutamate 137. Fe cation is bound at residue histidine 140.

Belongs to the polypeptide deformylase family. Requires Fe(2+) as cofactor.

It catalyses the reaction N-terminal N-formyl-L-methionyl-[peptide] + H2O = N-terminal L-methionyl-[peptide] + formate. Removes the formyl group from the N-terminal Met of newly synthesized proteins. Requires at least a dipeptide for an efficient rate of reaction. N-terminal L-methionine is a prerequisite for activity but the enzyme has broad specificity at other positions. This is Peptide deformylase from Desulfosudis oleivorans (strain DSM 6200 / JCM 39069 / Hxd3) (Desulfococcus oleovorans).